We begin with the raw amino-acid sequence, 255 residues long: MSLTLERGAIAPLPVLQDNIIWIWSCGSEAVVVDPAVAEPVIEALQQKGLTLIAVLQTHHHADHIGGTPDLLRQWPDAAVIASGQDRGRIPFQTQPVAAGTRFTLLGVPVDVIDVRAHTSAHLAFFLPEGCSPGGHPPALFCGDTLFSGGCGRLFEGTPDDMHRALQTLATLPESTRIYCAHEYTEGNLRWAHALQPEDRAIKARLEDVIALRTQHKLTIPSTLAEEHRSNLFLRAQSAAELGRLRQLKDDWKGF.

Residues His-59, His-61, Asp-63, His-64, His-118, Asp-144, and His-182 each coordinate Zn(2+).

This sequence belongs to the metallo-beta-lactamase superfamily. Glyoxalase II family. In terms of assembly, monomer. Zn(2+) serves as cofactor.

It catalyses the reaction an S-(2-hydroxyacyl)glutathione + H2O = a 2-hydroxy carboxylate + glutathione + H(+). It functions in the pathway secondary metabolite metabolism; methylglyoxal degradation; (R)-lactate from methylglyoxal: step 2/2. Thiolesterase that catalyzes the hydrolysis of S-D-lactoyl-glutathione to form glutathione and D-lactic acid. This Synechococcus sp. (strain WH7803) protein is Hydroxyacylglutathione hydrolase.